The sequence spans 205 residues: Lymphotoxin-alpha (205 aa).

The N-terminal stretch at 1-34 (MTPPERLFLPRVRGTTLHLLLLGLLLVLLPGAQG) is a signal peptide. Thr41 carries O-linked (GalNAc...) threonine glycosylation. The region spanning 63-205 (PAAHLIGDPS…STVFFGAFAL (143 aa)) is the THD domain. N-linked (GlcNAc...) asparagine glycosylation occurs at Asn96.

This sequence belongs to the tumor necrosis factor family. As to quaternary structure, homotrimer, and heterotrimer of either two LTB and one LTA subunits or (less prevalent) two LTA and one LTB subunits. Interacts with TNFRSF14.

The protein resides in the secreted. It is found in the membrane. Cytokine that in its homotrimeric form binds to TNFRSF1A/TNFR1, TNFRSF1B/TNFBR and TNFRSF14/HVEM. In its heterotrimeric form with LTB binds to TNFRSF3/LTBR. Lymphotoxin is produced by lymphocytes and is cytotoxic for a wide range of tumor cells in vitro and in vivo. The polypeptide is Lymphotoxin-alpha (LTA) (Pan troglodytes (Chimpanzee)).